Reading from the N-terminus, the 362-residue chain is Oryzain gamma chain (362 aa).

The N-terminal stretch at 1-24 (MAHRRIILLLAAAAVAATSAVAAA) is a signal peptide. Residues 25–144 (SSGFDDSNPI…GNHRMRDAAA (120 aa)) constitute a propeptide, activation peptide. Asparagine 128 carries N-linked (GlcNAc...) asparagine glycosylation. Disulfide bonds link cysteine 166-cysteine 209 and cysteine 200-cysteine 242. Cysteine 169 is an active-site residue. Asparagine 258 carries N-linked (GlcNAc...) asparagine glycosylation. Cysteine 300 and cysteine 350 are joined by a disulfide. Residues histidine 309 and asparagine 329 contribute to the active site.

Belongs to the peptidase C1 family. In terms of tissue distribution, expressed only in seeds.

In Oryza sativa subsp. japonica (Rice), this protein is Oryzain gamma chain.